Here is a 171-residue protein sequence, read N- to C-terminus: Small ribosomal subunit protein mS25 (171 aa).

The protein belongs to the mitochondrion-specific ribosomal protein mS25 family. As to quaternary structure, component of the mitochondrial ribosome small subunit (28S) which comprises a 12S rRNA and about 30 distinct proteins.

Its subcellular location is the mitochondrion. In Rattus norvegicus (Rat), this protein is Small ribosomal subunit protein mS25 (Mrps25).